We begin with the raw amino-acid sequence, 185 residues long: Guanylate kinase (185 aa).

The Guanylate kinase-like domain maps to 3 to 181; sequence TRMIIVAAPS…SYGEFKKIVE (179 aa). 10–17 serves as a coordination point for ATP; sequence APSGAGKS.

The protein belongs to the guanylate kinase family.

The protein resides in the cytoplasm. The enzyme catalyses GMP + ATP = GDP + ADP. Functionally, essential for recycling GMP and indirectly, cGMP. This chain is Guanylate kinase, found in Bdellovibrio bacteriovorus (strain ATCC 15356 / DSM 50701 / NCIMB 9529 / HD100).